Consider the following 291-residue polypeptide: Porphobilinogen deaminase (291 aa).

Position 238 is an S-(dipyrrolylmethanemethyl)cysteine (Cys-238).

Belongs to the HMBS family. In terms of assembly, monomer. The cofactor is dipyrromethane.

It catalyses the reaction 4 porphobilinogen + H2O = hydroxymethylbilane + 4 NH4(+). It participates in porphyrin-containing compound metabolism; protoporphyrin-IX biosynthesis; coproporphyrinogen-III from 5-aminolevulinate: step 2/4. Its function is as follows. Tetrapolymerization of the monopyrrole PBG into the hydroxymethylbilane pre-uroporphyrinogen in several discrete steps. The sequence is that of Porphobilinogen deaminase from Clostridium beijerinckii (strain ATCC 51743 / NCIMB 8052) (Clostridium acetobutylicum).